The chain runs to 398 residues: Dual-specificity RNA methyltransferase RlmN (398 aa).

Catalysis depends on Glu119, which acts as the Proton acceptor. A Radical SAM core domain is found at 125-364 (DGDRATLCVS…TIVRKTRGDD (240 aa)). Cys132 and Cys369 are oxidised to a cystine. Cys139, Cys143, and Cys146 together coordinate [4Fe-4S] cluster. S-adenosyl-L-methionine is bound by residues 193–194 (GE), Ser225, 247–249 (SLH), and Asn326. Cys369 serves as the catalytic S-methylcysteine intermediate.

It belongs to the radical SAM superfamily. RlmN family. Requires [4Fe-4S] cluster as cofactor.

The protein localises to the cytoplasm. It carries out the reaction adenosine(2503) in 23S rRNA + 2 reduced [2Fe-2S]-[ferredoxin] + 2 S-adenosyl-L-methionine = 2-methyladenosine(2503) in 23S rRNA + 5'-deoxyadenosine + L-methionine + 2 oxidized [2Fe-2S]-[ferredoxin] + S-adenosyl-L-homocysteine. It catalyses the reaction adenosine(37) in tRNA + 2 reduced [2Fe-2S]-[ferredoxin] + 2 S-adenosyl-L-methionine = 2-methyladenosine(37) in tRNA + 5'-deoxyadenosine + L-methionine + 2 oxidized [2Fe-2S]-[ferredoxin] + S-adenosyl-L-homocysteine. Its function is as follows. Specifically methylates position 2 of adenine 2503 in 23S rRNA and position 2 of adenine 37 in tRNAs. m2A2503 modification seems to play a crucial role in the proofreading step occurring at the peptidyl transferase center and thus would serve to optimize ribosomal fidelity. This Serratia proteamaculans (strain 568) protein is Dual-specificity RNA methyltransferase RlmN.